We begin with the raw amino-acid sequence, 661 residues long: Kyphoscoliosis peptidase (661 aa).

Positions 28–41 (GTLSDQQANPSSLL) are enriched in polar residues. 2 disordered regions span residues 28–47 (GTLS…GGGF) and 115–136 (QGDK…HAYP). Active-site residues include Cys-225, His-267, and Asp-282.

The protein belongs to the transglutaminase-like superfamily. Interacts with IGFN1 and FLNC. In terms of tissue distribution, highly expressed in skeletal muscle.

Its subcellular location is the cytoplasm. It is found in the cytoskeleton. It localises to the myofibril. The protein localises to the sarcomere. The protein resides in the z line. In terms of biological role, probable cytoskeleton-associated protease required for normal muscle growth. Involved in function, maturation and stabilization of the neuromuscular junction. May act by cleaving muscle-specific proteins such as FLNC. The sequence is that of Kyphoscoliosis peptidase from Homo sapiens (Human).